A 344-amino-acid chain; its full sequence is Protein RecA (344 aa).

ATP is bound at residue 65 to 72 (GPESSGKT). The segment covering 323 to 337 (ELREKFQPAEAPREA) has biased composition (basic and acidic residues). The tract at residues 323–344 (ELREKFQPAEAPREAGDDEDKE) is disordered.

This sequence belongs to the RecA family.

It is found in the cytoplasm. In terms of biological role, can catalyze the hydrolysis of ATP in the presence of single-stranded DNA, the ATP-dependent uptake of single-stranded DNA by duplex DNA, and the ATP-dependent hybridization of homologous single-stranded DNAs. It interacts with LexA causing its activation and leading to its autocatalytic cleavage. The sequence is that of Protein RecA from Xanthomonas axonopodis pv. citri (strain 306).